A 286-amino-acid chain; its full sequence is Shikimate dehydrogenase (NADP(+)) (286 aa).

Shikimate is bound by residues 19-21 (SLS) and threonine 66. Lysine 70 functions as the Proton acceptor in the catalytic mechanism. Shikimate is bound by residues asparagine 91 and aspartate 107. Residues 129 to 133 (GSGGA) and leucine 229 each bind NADP(+). Tyrosine 231 is a shikimate binding site. Glycine 252 lines the NADP(+) pocket.

Belongs to the shikimate dehydrogenase family. Homodimer.

It catalyses the reaction shikimate + NADP(+) = 3-dehydroshikimate + NADPH + H(+). The protein operates within metabolic intermediate biosynthesis; chorismate biosynthesis; chorismate from D-erythrose 4-phosphate and phosphoenolpyruvate: step 4/7. In terms of biological role, involved in the biosynthesis of the chorismate, which leads to the biosynthesis of aromatic amino acids. Catalyzes the reversible NADPH linked reduction of 3-dehydroshikimate (DHSA) to yield shikimate (SA). The polypeptide is Shikimate dehydrogenase (NADP(+)) (Prochlorococcus marinus (strain MIT 9312)).